Here is a 737-residue protein sequence, read N- to C-terminus: Translation initiation factor IF-2 (737 aa).

Positions 69–80 (EKKEEKPIRKIM) are enriched in basic and acidic residues. The interval 69 to 130 (EKKEEKPIRK…HKNKGKKKKG (62 aa)) is disordered. Basic residues-rich tracts occupy residues 95 to 108 (NNKKAKFQQTKNKK) and 121 to 130 (HKNKGKKKKG). The 168-residue stretch at 237-404 (ERPPVITIMG…TILITAEILE (168 aa)) folds into the tr-type G domain. The tract at residues 246–253 (GHVDHGKT) is G1. 246–253 (GHVDHGKT) serves as a coordination point for GTP. Positions 271 to 275 (GITQK) are G2. The G3 stretch occupies residues 292–295 (DTPG). GTP is bound by residues 292–296 (DTPGH) and 346–349 (NKID). The tract at residues 346–349 (NKID) is G4. A G5 region spans residues 382–384 (SAK).

Belongs to the TRAFAC class translation factor GTPase superfamily. Classic translation factor GTPase family. IF-2 subfamily.

It is found in the cytoplasm. One of the essential components for the initiation of protein synthesis. Protects formylmethionyl-tRNA from spontaneous hydrolysis and promotes its binding to the 30S ribosomal subunits. Also involved in the hydrolysis of GTP during the formation of the 70S ribosomal complex. The protein is Translation initiation factor IF-2 of Fusobacterium nucleatum subsp. nucleatum (strain ATCC 25586 / DSM 15643 / BCRC 10681 / CIP 101130 / JCM 8532 / KCTC 2640 / LMG 13131 / VPI 4355).